A 367-amino-acid polypeptide reads, in one-letter code: 2-aminoethylphosphonate--pyruvate transaminase (367 aa).

Lysine 194 is subject to N6-(pyridoxal phosphate)lysine.

The protein belongs to the class-V pyridoxal-phosphate-dependent aminotransferase family. PhnW subfamily. Homodimer. Pyridoxal 5'-phosphate is required as a cofactor.

It carries out the reaction (2-aminoethyl)phosphonate + pyruvate = phosphonoacetaldehyde + L-alanine. Functionally, involved in phosphonate degradation. In Salmonella paratyphi B (strain ATCC BAA-1250 / SPB7), this protein is 2-aminoethylphosphonate--pyruvate transaminase.